A 149-amino-acid polypeptide reads, in one-letter code: Large ribosomal subunit protein bL9 (149 aa).

It belongs to the bacterial ribosomal protein bL9 family.

In terms of biological role, binds to the 23S rRNA. The sequence is that of Large ribosomal subunit protein bL9 from Magnetococcus marinus (strain ATCC BAA-1437 / JCM 17883 / MC-1).